Consider the following 3329-residue polypeptide: Breast cancer type 2 susceptibility protein homolog (3329 aa).

An interaction with PALB2 region spans residues 1–40 (MPVEYKRRPTFWEIFKARCSTADLGPISLNWFEELSSEAP). Disordered regions lie at residues 37-69 (SEAP…QRNP) and 207-241 (EARS…SVPS). Residues serine 435 and serine 481 each carry the phosphoserine modification. Residues 628 to 650 (PDSSDKKRCLPNDPEEPSLTNSF) are disordered. The interaction with NPM1 stretch occupies residues 628 to 979 (PDSSDKKRCL…DKWSEFLDPV (352 aa)). Phosphoserine is present on serine 735. The span at 934-953 (EKSRNNIEQHQKGTEDKDFK) shows a compositional bias: basic and acidic residues. Residues 934-965 (EKSRNNIEQHQKGTEDKDFKSNSSLNMKSDGN) form a disordered region. The span at 954-965 (SNSSLNMKSDGN) shows a compositional bias: polar residues. BRCA2 repeat units lie at residues 981–1015 (NHNF…DIEE) and 1192–1226 (NEME…DIEN). Positions 982 to 2035 (HNFGGSFRTA…LHKVKGMLEE (1054 aa)) are interaction with RAD51. Residues 1296–1340 (NTKHEDSYTSSQRNNLENSDGSMSSTSGPVYIHKGDSDLPADQGS) form a disordered region. The segment covering 1303–1323 (YTSSQRNNLENSDGSMSSTSG) has biased composition (polar residues). 5 BRCA2 repeats span residues 1394 to 1428 (IKEF…RETD), 1491 to 1525 (KEPT…ETQY), 1623 to 1657 (TEDS…EQGD), 1924 to 1958 (PSRT…EMDG), and 2004 to 2038 (NSSV…EFDL). Serine 2048 carries the phosphoserine modification. Positions 2073-2099 (NSKLQKTYNDKSSLPSNYKESGSSGNT) are disordered. Over residues 2074–2099 (SKLQKTYNDKSSLPSNYKESGSSGNT) the composition is skewed to polar residues. The tract at residues 2219–2285 (KRGGVTVDAV…EPVTCGPFCS (67 aa)) is interaction with HSF2BP. The interval 2298–2466 (TSPAQELLSK…SPKQLYIYGV (169 aa)) is interaction with FANCD2. Residues 2361 to 2393 (FHGDEHFNSKNVNLEGKNQKSTDGDREDGNDSH) form a disordered region. The segment covering 2377-2393 (KNQKSTDGDREDGNDSH) has biased composition (basic and acidic residues). The tract at residues 2402–2753 (MSSLQSARDL…QRVYPLQWVE (352 aa)) is interaction with SEM1. Positions 2603-2619 (AAKTLVLCISDIISPST) match the Nuclear export signal; masked by interaction with SEM1 motif. Serine 3214 bears the Phosphoserine; by CDK1 and CDK2 mark. Disordered stretches follow at residues 3221-3257 (FQPP…VSLP) and 3273-3329 (QALT…AVES). Serine 3241 carries the phosphoserine modification. Positions 3309 to 3329 (SRKESLRDCRGDSSEKLAVES) are enriched in basic and acidic residues.

Monomer and dimer. Interacts with RAD51; regulates RAD51 recruitment and function at sites of DNA repair. Interacts with SEM1, WDR16, USP11, DMC1, ROCK2 and NPM1. Interacts with both nonubiquitinated and monoubiquitinated FANCD2; this complex also includes XRCC3 and phosphorylated FANCG. Part of a BRCA complex containing BRCA1, BRCA2 and PALB2. Component of the homologous recombination repair (HR) complex composed of ERCC5/XPG, BRCA2, PALB2, DSS1 and RAD51. Within the complex, interacts with ERCC5/XPG and PALB2. Interacts directly with PALB2 which may serve as a scaffold for a HR complex containing PALB2, BRCA2, RAD51C, RAD51 and XRCC3. Interacts with BRCA1 only in the presence of PALB2 which serves as the bridging protein. Interacts with POLH; the interaction is direct. Interacts with the TREX-2 complex subunits PCID2 and SEM1. Interacts with HSF2BP and BRME1; the interaction with HSF2BP is direct and allows the formation of a ternary complex. The complex BRME1:HSF2BP:BRCA2 interacts with SPATA22, MEIOB and RAD51. In terms of processing, phosphorylated by ATM upon irradiation-induced DNA damage. Phosphorylation by CHEK1 and CHEK2 regulates interaction with RAD51. Phosphorylation at Ser-3291 by CDK1 and CDK2 is low in S phase when recombination is active, but increases as cells progress towards mitosis; this phosphorylation prevents homologous recombination-dependent repair during S phase and G2 by inhibiting RAD51 binding. Post-translationally, ubiquitinated in the absence of DNA damage; this does not lead to proteasomal degradation. In contrast, ubiquitination in response to DNA damage leads to proteasomal degradation. Widely expressed. Highest expression in cerebellum, testis, ileum, appendix, epididymis, ovary and mammary gland. No expression in lung.

Its subcellular location is the nucleus. The protein localises to the cytoplasm. The protein resides in the cytoskeleton. It localises to the microtubule organizing center. It is found in the centrosome. Its function is as follows. Involved in double-strand break repair and/or homologous recombination. Binds RAD51 and potentiates recombinational DNA repair by promoting assembly of RAD51 onto single-stranded DNA (ssDNA). Acts by targeting RAD51 to ssDNA over double-stranded DNA, enabling RAD51 to displace replication protein-A (RPA) from ssDNA and stabilizing RAD51-ssDNA filaments by blocking ATP hydrolysis. Part of a PALB2-scaffolded HR complex containing RAD51C and which is thought to play a role in DNA repair by HR. May participate in S phase checkpoint activation. Binds selectively to ssDNA, and to ssDNA in tailed duplexes and replication fork structures. May play a role in the extension step after strand invasion at replication-dependent DNA double-strand breaks; together with PALB2 is involved in both POLH localization at collapsed replication forks and DNA polymerization activity. In concert with NPM1, regulates centrosome duplication. Interacts with the TREX-2 complex (transcription and export complex 2) subunits PCID2 and SEM1, and is required to prevent R-loop-associated DNA damage and thus transcription-associated genomic instability, independently of its known role in homologous recombination. The chain is Breast cancer type 2 susceptibility protein homolog from Mus musculus (Mouse).